Reading from the N-terminus, the 615-residue chain is Coagulation factor XII (615 aa).

The N-terminal stretch at 1-19 (MRALLLLGFLLVSLESTLS) is a signal peptide. The 49-residue stretch at 42-90 (VTGEPCHFPFQYHRQLYHKCTHKGRPGPQPWCATTPNFDQDQRWGYCLE) folds into the Fibronectin type-II domain. 13 cysteine pairs are disulfide-bonded: Cys-47–Cys-73, Cys-61–Cys-88, Cys-98–Cys-110, Cys-104–Cys-119, Cys-121–Cys-130, Cys-135–Cys-163, Cys-161–Cys-170, Cys-178–Cys-189, Cys-183–Cys-198, Cys-200–Cys-209, Cys-217–Cys-295, Cys-238–Cys-277, and Cys-266–Cys-290. One can recognise an EGF-like 1 domain in the interval 94–131 (VKDHCSKHSPCQKGGTCVNMPSGPHCLCPQHLTGNHCQ). Residue Thr-109 is glycosylated (O-linked (Fuc) threonine). Residues 133–173 (EKCFEPQLLRFFHKNEIWYRTEQAAVARCQCKGPDAHCQRL) enclose the Fibronectin type-I domain. One can recognise an EGF-like 2 domain in the interval 174-210 (ASQACRTNPCLHGGRCLEVEGHRLCHCPVGYTGAFCD). The Kringle domain maps to 217-295 (CYDGRGLSYR…SWEYCDLAQC (79 aa)). Asn-249 is a glycosylation site (N-linked (GlcNAc...) asparagine). Positions 298–359 (PTQAAPPTPV…SLTRNGPLSC (62 aa)) are disordered. 2 O-linked (GalNAc...) threonine glycosylation sites follow: Thr-299 and Thr-305. Ser-308 carries an O-linked (GalNAc...) serine glycan. Positions 317–326 (PAQPAPPKPQ) are enriched in pro residues. The span at 327-338 (PTTRTPPQSQTP) shows a compositional bias: low complexity. Thr-328, Thr-329, and Thr-337 each carry an O-linked (GalNAc...) threonine glycan. 7 disulfide bridges follow: Cys-359–Cys-486, Cys-397–Cys-413, Cys-405–Cys-475, Cys-436–Cys-439, Cys-500–Cys-569, Cys-532–Cys-548, and Cys-559–Cys-590. The Peptidase S1 domain occupies 373–614 (VVGGLVALRG…YLAWIREHTV (242 aa)). Catalysis depends on His-412, which acts as the Charge relay system. The N-linked (GlcNAc...) asparagine glycan is linked to Asn-433. Asp-461 (charge relay system) is an active-site residue. Ser-563 (charge relay system) is an active-site residue.

It belongs to the peptidase S1 family. Interacts with HRG; the interaction, which is enhanced in the presence of zinc ions and inhibited by heparin-binding, inhibits factor XII autoactivation and contact-initiated coagulation. Interacts (inactive and activated) with D7L2, an anticoagulant protein from Anopheles gambiae. Interacts (activated) with iripin-8, a serine protease inhibitor from Ixodes ricinus saliva. Interacts (inactive and activated) (via amino acids 1-77) with triafestin-1 and triafestin-2, anticoagulant proteins from Triatoma infestans. Interacts (inactive and activated) (via amino acids 1-77) with short form salivary protein D7R1, an anticoagulant protein from Anopheles stephensi. Interacts (inactive and activated) (via fibronectin type II domain) with haemaphysalin, an anticoagulant protein from Haemaphysalis longicornis. In terms of processing, factor XII is activated by kallikrein in alpha-factor XIIa, which is further converted by trypsin into beta-factor XIIa. Alpha-factor XIIa is composed of an NH2-terminal heavy chain, called coagulation factor XIIa heavy chain, and a COOH-terminal light chain, called coagulation factor XIIa light chain, connected by a disulfide bond. Beta-factor XIIa is composed of 2 chains linked by a disulfide bond, an N-terminal nonapeptide, called beta-factor XIIa part 1, and coagulation factor XIIa light chain, also known in this context as beta-factor XIIa part 2. O- and N-glycosylated. The O-linked polysaccharides were not identified, but are probably the mucin type linked to GalNAc.

Its subcellular location is the secreted. The enzyme catalyses Selective cleavage of Arg-|-Ile bonds in factor VII to form factor VIIa and factor XI to form factor XIa.. Its activity is regulated as follows. Activity is promoted in the presence of negatively charged surfaces. Factor XII is a serum glycoprotein that participates in the initiation of blood coagulation, fibrinolysis, and the generation of bradykinin and angiotensin. Prekallikrein is cleaved by factor XII to form kallikrein, which then cleaves factor XII first to alpha-factor XIIa and then trypsin cleaves it to beta-factor XIIa. Alpha-factor XIIa activates factor XI to factor XIa. This Homo sapiens (Human) protein is Coagulation factor XII (F12).